A 172-amino-acid polypeptide reads, in one-letter code: Stellate protein CG33238 (172 aa).

The protein belongs to the casein kinase 2 subunit beta family. Interacts in vitro with the casein kinase 2 alpha subunit (CkII-alpha). The relevance of such interaction is however unclear in vivo. As to expression, probably not expressed in wild-type flies. In males lacking the Y chromosome, it is testis-specific and constitutes the main component of star-shaped crystals.

Unknown. In males lacking the Y chromosome, its strong overexpression leads to the appearance of proteinaceous star-shaped crystals in the primary spermatocytes causing meiotic drive, possibly by interfering with normal casein kinase 2 activity. This Drosophila melanogaster (Fruit fly) protein is Stellate protein CG33238 (Ste:CG33238).